The following is a 281-amino-acid chain: Protein phosphatase 2C homolog 1 (281 aa).

A PPM-type phosphatase domain is found at 20 to 281 (RVGVAENKNS…DNVTVMVVFL (262 aa)). D58, G59, D233, and D272 together coordinate Mn(2+).

This sequence belongs to the PP2C family. In terms of assembly, interacts with NBP2 and PBS2. Requires Mg(2+) as cofactor. Mn(2+) is required as a cofactor.

It is found in the peroxisome. It carries out the reaction O-phospho-L-seryl-[protein] + H2O = L-seryl-[protein] + phosphate. The enzyme catalyses O-phospho-L-threonyl-[protein] + H2O = L-threonyl-[protein] + phosphate. In terms of biological role, serine and threonine phosphatase. Involved in tRNA splicing and cell separation. This chain is Protein phosphatase 2C homolog 1 (PTC1), found in Saccharomyces cerevisiae (strain ATCC 204508 / S288c) (Baker's yeast).